The sequence spans 406 residues: Ascaroside receptor GPR2 (406 aa).

Residues 1 to 29 (MTQLPYLLDRRGGALAAPATAWGDMMLNR) lie on the Extracellular side of the membrane. Residues 30–50 (ALFSVALLSSVGSAWVVLSYA) traverse the membrane as a helical segment. The Cytoplasmic segment spans residues 51-61 (CIKELRSYRHQ). A helical transmembrane segment spans residues 62–82 (LILGLAISDLLMSLNFMFSAG). Residues 83–107 (WNVAGGDLALEESRTACSVNGFLTQ) are Extracellular-facing. C99 and C173 are joined by a disulfide. Residues 108–128 (VFVVQTDWWILVIAIATYIIL) traverse the membrane as a helical segment. Residues 129–143 (GNFKTQSQFIQTHVW) are Cytoplasmic-facing. Residues 144–164 (IPWVGPWVLSIIIAAICHGVL) form a helical membrane-spanning segment. Residues 165–185 (GYGYIGGWCWLTSDLMRLLIN) lie on the Extracellular side of the membrane. A helical transmembrane segment spans residues 186–206 (FIPRWLIVIAIALIYIRLYMI). At 207 to 326 (VRKARKWDIE…AAQLKRIAKK (120 aa)) the chain is on the cytoplasmic side. A helical transmembrane segment spans residues 327-347 (MMVYPVAYAIIWACPTAIRIY). The Extracellular segment spans residues 348–356 (QGTTGSRAP). Residues 357 to 377 (LWITIVDKSCIVIQGLVDAVV) form a helical membrane-spanning segment. The Cytoplasmic segment spans residues 378 to 406 (YGLNERAWQGWRDHIRRIIYKNEGGRIIG).

The protein belongs to the G-protein coupled receptor 1 family. Interacts with ascaroside receptor GPR3; may form a functional heterodimer. Interacts with guanine nucleotide-binding protein alpha GPA2; to activate adenylate cyclase and positively regulate nematode trap formation.

The protein localises to the cell membrane. In terms of biological role, g protein-coupled receptor that senses nematode ascaroside pheromones and signals via adenylate cyclase to positively regulate trap formation for nematode capture. This chain is Ascaroside receptor GPR2, found in Arthrobotrys oligospora (strain ATCC 24927 / CBS 115.81 / DSM 1491) (Nematode-trapping fungus).